Reading from the N-terminus, the 226-residue chain is NAD(P)H-hydrate epimerase (226 aa).

Residues 10–215 (AIELDLDLFE…ALQRKYQLNL (206 aa)) form the YjeF N-terminal domain. 58 to 62 (NNGGD) is a (6S)-NADPHX binding site. K(+)-binding residues include asparagine 59 and aspartate 123. Residues 127-133 (GFGFKPP) and aspartate 156 contribute to the (6S)-NADPHX site. Residue serine 159 participates in K(+) binding.

Belongs to the NnrE/AIBP family. Requires K(+) as cofactor.

The enzyme catalyses (6R)-NADHX = (6S)-NADHX. It catalyses the reaction (6R)-NADPHX = (6S)-NADPHX. In terms of biological role, catalyzes the epimerization of the S- and R-forms of NAD(P)HX, a damaged form of NAD(P)H that is a result of enzymatic or heat-dependent hydration. This is a prerequisite for the S-specific NAD(P)H-hydrate dehydratase to allow the repair of both epimers of NAD(P)HX. This chain is NAD(P)H-hydrate epimerase, found in Drosophila persimilis (Fruit fly).